The following is a 538-amino-acid chain: Phosphoenolpyruvate carboxykinase (ATP) (538 aa).

Substrate-binding residues include R64, Y205, and K211. Residues K211, H230, and 246–254 (GLSGTGKTT) contribute to the ATP site. Mn(2+)-binding residues include K211 and H230. A Mn(2+)-binding site is contributed by D267. Residues E295, R331, 447-448 (RI), and T453 each bind ATP. Position 331 (R331) interacts with substrate.

It belongs to the phosphoenolpyruvate carboxykinase (ATP) family. As to quaternary structure, monomer. The cofactor is Mn(2+).

Its subcellular location is the cytoplasm. The enzyme catalyses oxaloacetate + ATP = phosphoenolpyruvate + ADP + CO2. It participates in carbohydrate biosynthesis; gluconeogenesis. In terms of biological role, involved in the gluconeogenesis. Catalyzes the conversion of oxaloacetate (OAA) to phosphoenolpyruvate (PEP) through direct phosphoryl transfer between the nucleoside triphosphate and OAA. This is Phosphoenolpyruvate carboxykinase (ATP) from Baumannia cicadellinicola subsp. Homalodisca coagulata.